The chain runs to 326 residues: MAAPASVMGPLGPSALGLLLLLLVVAPPRVAALVHRQPENQGISLTGSVACGRPSMEGKILGGVPAPERKWPWQVSVHYAGLHVCGGSILNEYWVLSAAHCFHRDKNIKIYDMYVGLVNLRVAGNHTQWYEVNRVILHPTYEMYHPIGGDVALVQLKTRIVFSESVLPVCLATPEVNLTSANCWATGWGLVSKQGETSDELQEMQLPLILEPWCHLLYGHMSYIMPDMLCAGDILNAKTVCEGDSGGPLVCEFNRSWLQIGIVSWGRGCSNPLYPGVYASVSYFSKWICDNIEITPTPAQPAPALSPALGPTLSVLMAMLAGWSVL.

The first 32 residues, 1-32 (MAAPASVMGPLGPSALGLLLLLLVVAPPRVAA), serve as a signal peptide directing secretion. Positions 33 to 59 (LVHRQPENQGISLTGSVACGRPSMEGK) are cleaved as a propeptide — activation peptide. The 234-residue stretch at 60–293 (ILGGVPAPER…FSKWICDNIE (234 aa)) folds into the Peptidase S1 domain. A disulfide bridge connects residues Cys85 and Cys101. The Charge relay system role is filled by His100. A glycan (N-linked (GlcNAc...) asparagine) is linked at Asn125. The Charge relay system role is filled by Asp150. 3 cysteine pairs are disulfide-bonded: Cys183/Cys251, Cys214/Cys230, and Cys241/Cys269. The active-site Charge relay system is the Ser245.

The protein belongs to the peptidase S1 family.

It localises to the secreted. The protein is Serine protease 38 (PRSS38) of Homo sapiens (Human).